Here is a 299-residue protein sequence, read N- to C-terminus: Oxygen-dependent coproporphyrinogen-III oxidase (299 aa).

Serine 92 is a substrate binding site. Histidine 96 and histidine 106 together coordinate a divalent metal cation. Histidine 106 acts as the Proton donor in catalysis. 108-110 (NVR) is a substrate binding site. Residues histidine 145 and histidine 175 each coordinate a divalent metal cation. Positions 239-274 (YVEFNLVYDRGTLFGLQSGGRAESILMSLPPQVRWE) are important for dimerization. 257–259 (GGR) is a substrate binding site.

This sequence belongs to the aerobic coproporphyrinogen-III oxidase family. As to quaternary structure, homodimer. It depends on a divalent metal cation as a cofactor.

Its subcellular location is the cytoplasm. It carries out the reaction coproporphyrinogen III + O2 + 2 H(+) = protoporphyrinogen IX + 2 CO2 + 2 H2O. It participates in porphyrin-containing compound metabolism; protoporphyrin-IX biosynthesis; protoporphyrinogen-IX from coproporphyrinogen-III (O2 route): step 1/1. Functionally, involved in the heme biosynthesis. Catalyzes the aerobic oxidative decarboxylation of propionate groups of rings A and B of coproporphyrinogen-III to yield the vinyl groups in protoporphyrinogen-IX. The protein is Oxygen-dependent coproporphyrinogen-III oxidase of Xanthomonas campestris pv. campestris (strain B100).